The primary structure comprises 301 residues: Aldose reductase (301 aa).

11-20 (GKEIPTVGLG) contributes to the NADP(+) binding site. Residue Tyr51 is the Proton donor of the active site. His111 lines the substrate pocket. Position 209–266 (209–266 (SSLGSAPGSSAKVRDDKTIKAIAKKYGCAPSQIILSYITAQGICVIPKSRSKEHLREN)) interacts with NADP(+).

This sequence belongs to the aldo/keto reductase family.

It is found in the cytoplasm. It carries out the reaction an alditol + NAD(+) = an aldose + NADH + H(+). The enzyme catalyses an alditol + NADP(+) = an aldose + NADPH + H(+). Its function is as follows. Catalyzes the NADPH-dependent reduction of a wide variety of carbonyl-containing compounds to their corresponding alcohols with a broad range of catalytic efficiencies. This is Aldose reductase from Encephalitozoon cuniculi (strain GB-M1) (Microsporidian parasite).